The primary structure comprises 208 residues: Imidazoleglycerol-phosphate dehydratase (208 aa).

Belongs to the imidazoleglycerol-phosphate dehydratase family.

It is found in the cytoplasm. The catalysed reaction is D-erythro-1-(imidazol-4-yl)glycerol 3-phosphate = 3-(imidazol-4-yl)-2-oxopropyl phosphate + H2O. Its pathway is amino-acid biosynthesis; L-histidine biosynthesis; L-histidine from 5-phospho-alpha-D-ribose 1-diphosphate: step 6/9. The polypeptide is Imidazoleglycerol-phosphate dehydratase (Paenarthrobacter aurescens (strain TC1)).